The chain runs to 197 residues: dITP/XTP pyrophosphatase (197 aa).

Residue 8–13 (TGNVGK) participates in substrate binding. Positions 40 and 69 each coordinate Mg(2+). The Proton acceptor role is filled by Asp69. Residues Ser70, 154-157 (FGYD), Lys177, and 182-183 (HR) each bind substrate.

Belongs to the HAM1 NTPase family. In terms of assembly, homodimer. Requires Mg(2+) as cofactor. Mn(2+) is required as a cofactor. The cofactor is Ni(2+).

The catalysed reaction is XTP + H2O = XMP + diphosphate + H(+). It carries out the reaction dITP + H2O = dIMP + diphosphate + H(+). The enzyme catalyses ITP + H2O = IMP + diphosphate + H(+). Pyrophosphatase that catalyzes the hydrolysis of nucleoside triphosphates to their monophosphate derivatives, with a high preference for the non-canonical purine nucleotides XTP (xanthosine triphosphate), dITP (deoxyinosine triphosphate) and ITP. Can also efficiently hydrolyze 2'-deoxy-N-6-hydroxylaminopurine triphosphate (dHAPTP). Seems to function as a house-cleaning enzyme that removes non-canonical purine nucleotides from the nucleotide pool, thus preventing their incorporation into DNA/RNA and avoiding chromosomal lesions. To a much lesser extent, is also able to hydrolyze GTP, dGTP and dUTP, but shows very low activity toward the canonical nucleotides dATP, dCTP and dTTP and toward 8-oxo-dGTP, purine deoxyribose triphosphate, 2-aminopurine deoxyribose triphosphate and 2,6-diaminopurine deoxyribose triphosphate. In terms of biological role, genetic interactions among priB, dam, lexA, nagC, polA, rdgB, rdgB, rep and uup link the PriA-PriB replication restart pathway to DNA double-strand break repair. In Escherichia coli (strain K12), this protein is dITP/XTP pyrophosphatase.